Here is a 663-residue protein sequence, read N- to C-terminus: UvrABC system protein B (663 aa).

Residues 1-10 show a composition bias toward basic and acidic residues; the sequence is MIDKRDDKPF. The tract at residues 1-23 is disordered; that stretch reads MIDKRDDKPFKLKSKYKPSGDQP. Positions 31-271 constitute a Helicase ATP-binding domain; it reads DNIEGGEKAQ…EQSIAKIQAE (241 aa). 44-51 contributes to the ATP binding site; sequence GATGTGKT. The Beta-hairpin signature appears at 97-120; it reads YYDYYQPEAYVPSSDTYIEKDSSV. One can recognise a Helicase C-terminal domain in the interval 435-601; sequence QIDDLLGEIN…TIKKDIRGLI (167 aa). The UVR domain occupies 627 to 662; it reads KEAINALQKQMQEAAELLDFELAAQMRDLILELKLM.

This sequence belongs to the UvrB family. Forms a heterotetramer with UvrA during the search for lesions. Interacts with UvrC in an incision complex.

Its subcellular location is the cytoplasm. The UvrABC repair system catalyzes the recognition and processing of DNA lesions. A damage recognition complex composed of 2 UvrA and 2 UvrB subunits scans DNA for abnormalities. Upon binding of the UvrA(2)B(2) complex to a putative damaged site, the DNA wraps around one UvrB monomer. DNA wrap is dependent on ATP binding by UvrB and probably causes local melting of the DNA helix, facilitating insertion of UvrB beta-hairpin between the DNA strands. Then UvrB probes one DNA strand for the presence of a lesion. If a lesion is found the UvrA subunits dissociate and the UvrB-DNA preincision complex is formed. This complex is subsequently bound by UvrC and the second UvrB is released. If no lesion is found, the DNA wraps around the other UvrB subunit that will check the other stand for damage. This chain is UvrABC system protein B, found in Streptococcus pyogenes serotype M5 (strain Manfredo).